A 457-amino-acid chain; its full sequence is Cysteine--tRNA ligase (457 aa).

Cys28 lines the Zn(2+) pocket. A 'HIGH' region motif is present at residues 30 to 40; that stretch reads ITVYDLCHIGH. Residues Cys209, His234, and Glu238 each contribute to the Zn(2+) site. Residues 266 to 270 carry the 'KMSKS' region motif; the sequence is KMSKS. Residue Lys269 coordinates ATP.

Belongs to the class-I aminoacyl-tRNA synthetase family. In terms of assembly, monomer. It depends on Zn(2+) as a cofactor.

The protein resides in the cytoplasm. It catalyses the reaction tRNA(Cys) + L-cysteine + ATP = L-cysteinyl-tRNA(Cys) + AMP + diphosphate. The polypeptide is Cysteine--tRNA ligase (Sodalis glossinidius (strain morsitans)).